Consider the following 205-residue polypeptide: Hydrogenase-4 component A (205 aa).

4 4Fe-4S ferredoxin-type domains span residues 2-31 (NRFV…TQGL), 41-72 (KTST…SQRD), 73-102 (DAIQ…ASGS), and 140-172 (QTVA…LITG). [4Fe-4S] cluster contacts are provided by Cys-12, Cys-15, Cys-18, Cys-22, Cys-51, Cys-54, Cys-59, Cys-63, Cys-82, Cys-85, Cys-88, Cys-92, Cys-146, Cys-149, Cys-158, and Cys-162.

[4Fe-4S] cluster serves as cofactor.

Its function is as follows. Probable electron transfer protein for hydrogenase 4. This chain is Hydrogenase-4 component A, found in Escherichia coli (strain K12).